The chain runs to 290 residues: MAGREILHKMKVGLCGSDTGRGKTKVWKNIAHGYDFVKGKAGHPMEDYVVSEFKKVDGHDLGLFAIFDGHLGHDVAKYLQTNLFDNILKEKDFWTDTKNAIRNAYISTDAVILEQSLKLGKGGSTAVTGILIDGKTLVIANVGDSRAVMSKNGVASQLSVDHEPSKEQKEIESRGGFVSNIPGDVPRVDGQLAVARAFGDKSLKIHLSSDPDIRDENIDHETEFILFASDGVWKVMSNQEAVDLIKSIKDPQAAAKELIEEAVSKQSTDDISCIVPCFLRREALSERYCR.

Positions 31 to 278 (AHGYDFVKGK…DDISCIVPCF (248 aa)) constitute a PPM-type phosphatase domain. Residues aspartate 68, glycine 69, aspartate 230, and aspartate 269 each coordinate Mn(2+).

Belongs to the PP2C family. Mg(2+) serves as cofactor. Mn(2+) is required as a cofactor.

The catalysed reaction is O-phospho-L-seryl-[protein] + H2O = L-seryl-[protein] + phosphate. It carries out the reaction O-phospho-L-threonyl-[protein] + H2O = L-threonyl-[protein] + phosphate. May be involved in defense signaling. This chain is Probable protein phosphatase 2C 20 (PPC3-1.2), found in Arabidopsis thaliana (Mouse-ear cress).